The sequence spans 386 residues: Cell division protein FtsZ (386 aa).

GTP is bound by residues 20 to 24 (GGGGN), 107 to 109 (GTG), Glu138, Arg142, and Asn186. The segment at 350–377 (LNQEQKTAAKAVNEQNAQGSKEPDYLDI) is disordered.

The protein belongs to the FtsZ family. In terms of assembly, homodimer. Polymerizes to form a dynamic ring structure in a strictly GTP-dependent manner. Interacts directly with several other division proteins.

The protein localises to the cytoplasm. In terms of biological role, essential cell division protein that forms a contractile ring structure (Z ring) at the future cell division site. The regulation of the ring assembly controls the timing and the location of cell division. One of the functions of the FtsZ ring is to recruit other cell division proteins to the septum to produce a new cell wall between the dividing cells. Binds GTP and shows GTPase activity. This chain is Cell division protein FtsZ, found in Sodalis glossinidius.